The primary structure comprises 95 residues: uncharacterized protein (95 aa).

Residues 14-50 are a coiled coil; it reads KMEQKLQEQLDGLLEKYTELLLGETNDELKEEVKQWI.

This is an uncharacterized protein from Bacillus subtilis (strain 168).